The primary structure comprises 198 residues: Nucleoid occlusion factor SlmA (198 aa).

The region spanning 9–70 is the HTH tetR-type domain; that stretch reads RNRREEILQA…SLIEFIEDSL (62 aa). The H-T-H motif DNA-binding region spans 33 to 52; that stretch reads TTAKLAANVGVSEAALYRHF. A coiled-coil region spans residues 119–144; it reads DRLQGRINQLYERIEVQLRQVLRERK.

It belongs to the nucleoid occlusion factor SlmA family. Homodimer. Interacts with FtsZ.

It localises to the cytoplasm. The protein resides in the nucleoid. Its function is as follows. Required for nucleoid occlusion (NO) phenomenon, which prevents Z-ring formation and cell division over the nucleoid. Acts as a DNA-associated cell division inhibitor that binds simultaneously chromosomal DNA and FtsZ, and disrupts the assembly of FtsZ polymers. SlmA-DNA-binding sequences (SBS) are dispersed on non-Ter regions of the chromosome, preventing FtsZ polymerization at these regions. The chain is Nucleoid occlusion factor SlmA from Sodalis glossinidius (strain morsitans).